The following is a 908-amino-acid chain: MITKLLTKVIGSRNDRTLRRLRKIVKEINNFEPTFEALSDDELKAKTVEFRERLDKGESLDQLLPEAFATVREASKRVYGMRHFDVQMIGGMVLNAGQIAEMRTGEGKTLTATLPAYLNALPSKGVHVITVNDYLAKRDAETNRPLFEFLGMTVGVNVANMAPPEKKEAYQADILYGTNNEFGFDYLRDNMAFRAEDRVQRERFFAVVDEVDSILIDEARTPLIISGPAEDSSDLYTRINTLIPSLERQDKEDSEEYRGEGHYTMDEKSKQVHLTENGQEFVEELMVKNGLMEEGDTLYSPTNISLLHHVNAALRAHVLFEKNVDYIVTEEGEVVIVDEHTGRTMPGRRWSEGLHQAVEAKEGVKIQNENQTLASITFQNFFRLYEKLSGMTGTADTEAFEFQSIYGLETVVIPTNKPMVRNDMPDVVYRTEEDKFNAIIEDIKDRVAAGQPSLVGTVSIEKSELLSNALKKSKIKHNVLNAKFHEMEAEIVAQAGMPGAVTIATNMAGRGTDIVLGGSWQAQLEKLDNPTKEQIEKIKADWRIIHDKVLESGGLHIIGTERHESRRIDNQLRGRSGRQGDAGSSRFYLSMEDSLLRIFTSDRMAGLIQSGMDEGEAIESKMLSRSIEKAQRKVEGRNFDIRKQLLEYDDVANDQRKVVYELRDELMSSDDISEMIEHNREDVLASVIDEYIAPQSLEDMWDIAGLQDRLKNDFDLDFDIQGWLDEDDKLYEEALRERILGMAVDSYKQKEEVVGAQVLRNFEKSVMLQTLDGLWKEHLAAMDHLRQGIHLRGYAQKNPKQEYKRESFELFEGLLDVLKTDVVTILSKVRVQQQEEVEKMEAQRQAQAEQAARRAQAQHATAENQLADDEAEAASPQTVVRDERKVGRNEPCPCGSGKKYKQCHGKID.

ATP-binding positions include Gln-87, 105–109 (GEGKT), and Asp-513. A compositionally biased stretch (low complexity) spans 852-863 (ARRAQAQHATAE). The disordered stretch occupies residues 852-908 (ARRAQAQHATAENQLADDEAEAASPQTVVRDERKVGRNEPCPCGSGKKYKQCHGKID). Zn(2+) is bound by residues Cys-892, Cys-894, Cys-903, and His-904. Residues 898-908 (KKYKQCHGKID) show a composition bias toward basic residues.

This sequence belongs to the SecA family. Monomer and homodimer. Part of the essential Sec protein translocation apparatus which comprises SecA, SecYEG and auxiliary proteins SecDF-YajC and YidC. Zn(2+) is required as a cofactor.

The protein localises to the cell inner membrane. The protein resides in the cytoplasm. It catalyses the reaction ATP + H2O + cellular proteinSide 1 = ADP + phosphate + cellular proteinSide 2.. Part of the Sec protein translocase complex. Interacts with the SecYEG preprotein conducting channel. Has a central role in coupling the hydrolysis of ATP to the transfer of proteins into and across the cell membrane, serving both as a receptor for the preprotein-SecB complex and as an ATP-driven molecular motor driving the stepwise translocation of polypeptide chains across the membrane. This chain is Protein translocase subunit SecA, found in Vibrio atlanticus (strain LGP32) (Vibrio splendidus (strain Mel32)).